Reading from the N-terminus, the 207-residue chain is Large ribosomal subunit protein uL3 (207 aa).

Residues 129 to 152 (AGGPAGHGSRFQRHPGSIGSNTTP) are disordered.

It belongs to the universal ribosomal protein uL3 family. As to quaternary structure, part of the 50S ribosomal subunit. Forms a cluster with proteins L14 and L19.

One of the primary rRNA binding proteins, it binds directly near the 3'-end of the 23S rRNA, where it nucleates assembly of the 50S subunit. This chain is Large ribosomal subunit protein uL3, found in Leptospira biflexa serovar Patoc (strain Patoc 1 / ATCC 23582 / Paris).